Here is a 146-residue protein sequence, read N- to C-terminus: 3-hydroxyacyl-[acyl-carrier-protein] dehydratase FabZ (146 aa).

H47 is a catalytic residue.

Belongs to the thioester dehydratase family. FabZ subfamily.

The protein resides in the cytoplasm. The catalysed reaction is a (3R)-hydroxyacyl-[ACP] = a (2E)-enoyl-[ACP] + H2O. Involved in unsaturated fatty acids biosynthesis. Catalyzes the dehydration of short chain beta-hydroxyacyl-ACPs and long chain saturated and unsaturated beta-hydroxyacyl-ACPs. This is 3-hydroxyacyl-[acyl-carrier-protein] dehydratase FabZ from Methylococcus capsulatus (strain ATCC 33009 / NCIMB 11132 / Bath).